A 336-amino-acid polypeptide reads, in one-letter code: MAVDKEVQLHAQAWEHALSYINSTALSAAVELEIPDILEDHGGLMSLSELSAASGCPREPLYRLMRFLIFHGIFTKSDDCYAQSPLSRLFTRENLGPYMLMQATPVTRSPAGLSGEALKTGTSLYLKSIRGEDSWSDPAYGYHMKAFTNAMIAHARLTAAAIVSNYPAAFDGLRSVVDVGGRHGTAIGRLVEAFPWVRGIAFDLPEIVADAPPRKGVDFVGGDMFESVPKADAVMLMWILHDWSDDKCIEILKKCKEAIPASTGKVMIVDAIINEDGEGDEFSGARLSLDMIMLAVMAQGKERTYKEWVHLLNEAGFSKHTVKNIKSIESVIEAYP.

S-adenosyl-L-methionine-binding residues include Tyr-140 and Asp-203. Catalysis depends on His-241, which acts as the Proton acceptor.

It belongs to the class I-like SAM-binding methyltransferase superfamily. Cation-independent O-methyltransferase family. Homodimer. In terms of tissue distribution, expressed in leaves.

It catalyses the reaction scutellarein 7-methyl ether + S-adenosyl-L-methionine = ladanein + S-adenosyl-L-homocysteine + H(+). The enzyme catalyses cirsimaritin + S-adenosyl-L-methionine = salvigenin + S-adenosyl-L-homocysteine + H(+). The catalysed reaction is cirsiliol + S-adenosyl-L-methionine = eupatorin + S-adenosyl-L-homocysteine + H(+). It carries out the reaction genkwanin + S-adenosyl-L-methionine = apigenin 4',7-dimethyl ether + S-adenosyl-L-homocysteine. It functions in the pathway flavonoid metabolism. Substrate inhibition by genkwanin (GENK) at concentrations above 2.5 mM. Flavonoid 4'-O-methyltransferase involved in the biosynthesis of polymethoxylated flavonoids natural products such as nevadensin and salvigenin, aroma compounds which contribute to the flavor of sweet basil, and exhibit pharmacological activities such as anti-allergic, anti-oxidant, antibacterial, anti-proliferative, and anti-inflammatory effects. Catalyzes S-adenosylmethionine-dependent regioselective 4'-O-methylation of flavonoids; active on various hydroxylated flavonoid substrates, including scutellarein-7-methyl ether (SCU7Me) and cirsimaritin (CIRM), and, with a lower efficiency, hispidulin, ladanein (LAD), cirsioliol (CIRL) and genkwanin (GENK). This Ocimum basilicum (Sweet basil) protein is Flavonoid 4'-O-methyltransferase 3.